The sequence spans 164 residues: Large ribosomal subunit protein bL9 (164 aa).

Belongs to the bacterial ribosomal protein bL9 family.

Its function is as follows. Binds to the 23S rRNA. This chain is Large ribosomal subunit protein bL9, found in Borrelia duttonii (strain Ly).